Here is a 360-residue protein sequence, read N- to C-terminus: MKSQTSGYVDPQTEEYDESREKSYQVLIAVSGVLSITSLLILVLFVPSMYNYVDNISRFSRRDFEFCQASANDLETEMMSVREGLLRGRNVTKRAAGYGHYNPSMLAADSPQFQECPACCIPGERGPSGDSGLPALPGAPGPDGAPGRPGTTPNASCIPERVFEPPPCLPCPQGPRGVPGHPGFPGDPGEYGIGGRPGSDGMPGKPGDPGLAGPIGPPGESGPIGDKGRTPEAHVIPGPPGDSGLPGPWGPPGSAGMPGEDGYAGTPGEKGWPGPPGAPGPGGMPGPNGPTGEQGPSGTPGTCVCQDTEVVMNDEKGRVPAPRDNVAPGATGGSYEPQGGNDAAAPSAISQSQNRRIRKW.

Triple-helical region stretches follow at residues 123–152, 174–230, and 238–303; these read GERG…PGTT, GPRG…KGRT, and GPPG…PGTC. 2 disordered regions span residues 127-158 and 174-360; these read PSGD…ASCI and GPRG…IRKW. Residues 189-198 show a composition bias toward gly residues; it reads GEYGIGGRPG. Residues 242 to 258 are compositionally biased toward low complexity; that stretch reads DSGLPGPWGPPGSAGMP. Over residues 273–288 the composition is skewed to pro residues; sequence PGPPGAPGPGGMPGPN.

It belongs to the cuticular collagen family. As to quaternary structure, collagen polypeptide chains are complexed within the cuticle by disulfide bonds and other types of covalent cross-links.

In terms of biological role, nematode cuticles are composed largely of collagen-like proteins. The cuticle functions both as an exoskeleton and as a barrier to protect the worm from its environment. Mutations in dpy-2 affects the body shape. The protein is Cuticle collagen dpy-2 (dpy-2) of Caenorhabditis elegans.